Here is a 223-residue protein sequence, read N- to C-terminus: RNA polymerase sigma-H factor (223 aa).

A Polymerase core binding motif is present at residues 67–80; sequence DIVQEGMIGLYKSI. The H-T-H motif DNA-binding region spans 187–206; it reads YQEISEELNRHVKSIDNALQ.

The protein belongs to the sigma-70 factor family.

Functionally, sigma factors are initiation factors that promote the attachment of RNA polymerase to specific initiation sites and are then released. This sigma factor is involved in the transition to post-exponential phase in the beginning of sporulation. This is RNA polymerase sigma-H factor (sigH) from Bacillus licheniformis.